We begin with the raw amino-acid sequence, 304 residues long: HTH-type transcriptional regulator BenM (304 aa).

Residues 1 to 58 (MELRHLRYFVAVVEEQSFTKAADKLCIAQPPLSRQIQNLEEELGIQLLERGSRPVKTT) form the HTH lysR-type domain. The H-T-H motif DNA-binding region spans 18–37 (FTKAADKLCIAQPPLSRQIQ). Positions 99 and 104 each coordinate benzoate. Position 99 (Ser-99) interacts with cis,cis-muconate. Thr-128 lines the cis,cis-muconate pocket. Benzoate is bound by residues Phe-144, Arg-160, and Asn-202. Phe-203 provides a ligand contact to cis,cis-muconate. Benzoate is bound at residue Tyr-293.

The protein belongs to the LysR transcriptional regulatory family. Homotetramer; dimer of dimers. The dimers can also associate to form linear, higher oligomers (in vitro).

Functionally, positive regulator of the ben and cat genes for benzoate degradation. BenM is necessary for ben gene expression but not for expression of the cat genes, which can be regulated by CatM. Binds to the inducers cis,cis-muconate and benzoate. The protein is HTH-type transcriptional regulator BenM (benM) of Acinetobacter baylyi (strain ATCC 33305 / BD413 / ADP1).